The sequence spans 162 residues: 2-C-methyl-D-erythritol 2,4-cyclodiphosphate synthase (162 aa).

The a divalent metal cation site is built by D10 and H12. 4-CDP-2-C-methyl-D-erythritol 2-phosphate-binding positions include 10 to 12 and 36 to 37; these read DVH and HS. H44 is a binding site for a divalent metal cation. 4-CDP-2-C-methyl-D-erythritol 2-phosphate contacts are provided by residues 58–60, 63–67, and R144; these read DIG and FSDTD.

It belongs to the IspF family. In terms of assembly, homotrimer. Requires a divalent metal cation as cofactor.

The catalysed reaction is 4-CDP-2-C-methyl-D-erythritol 2-phosphate = 2-C-methyl-D-erythritol 2,4-cyclic diphosphate + CMP. Its pathway is isoprenoid biosynthesis; isopentenyl diphosphate biosynthesis via DXP pathway; isopentenyl diphosphate from 1-deoxy-D-xylulose 5-phosphate: step 4/6. In terms of biological role, involved in the biosynthesis of isopentenyl diphosphate (IPP) and dimethylallyl diphosphate (DMAPP), two major building blocks of isoprenoid compounds. Catalyzes the conversion of 4-diphosphocytidyl-2-C-methyl-D-erythritol 2-phosphate (CDP-ME2P) to 2-C-methyl-D-erythritol 2,4-cyclodiphosphate (ME-CPP) with a corresponding release of cytidine 5-monophosphate (CMP). This is 2-C-methyl-D-erythritol 2,4-cyclodiphosphate synthase from Burkholderia mallei (strain NCTC 10247).